We begin with the raw amino-acid sequence, 296 residues long: Nucleotide-binding protein spr1424 (296 aa).

Residue 13–20 coordinates ATP; sequence GMGGAGKT. 63–66 provides a ligand contact to GTP; it reads DMRS.

This sequence belongs to the RapZ-like family.

Functionally, displays ATPase and GTPase activities. In Streptococcus pneumoniae (strain ATCC BAA-255 / R6), this protein is Nucleotide-binding protein spr1424.